The sequence spans 304 residues: DnaJ homolog subfamily C member 17 (304 aa).

In terms of domain architecture, J spans 11 to 76 (DLYALLGIEE…AARAAYDKVR (66 aa)). A compositionally biased stretch (basic and acidic residues) spans 79–106 (KKQAAERTQKLDEKRKKVKLDLEARERQ). The interval 79-145 (KKQAAERTQK…SRQLEEQQRL (67 aa)) is disordered. Residue Ser-112 is modified to Phosphoserine. Basic and acidic residues predominate over residues 118 to 145 (SRSTRTLEQEIERLREEGSRQLEEQQRL). Residues 178–249 (KCKKEDESKG…NPLKISWLEG (72 aa)) enclose the RRM domain. At Lys-264 the chain carries N6-methyllysine.

Its subcellular location is the cytoplasm. It is found in the nucleus. Functionally, may negatively affect PAX8-induced thyroglobulin/TG transcription. The polypeptide is DnaJ homolog subfamily C member 17 (DNAJC17) (Homo sapiens (Human)).